Reading from the N-terminus, the 421-residue chain is CinA-like protein (421 aa).

The protein belongs to the CinA family.

The polypeptide is CinA-like protein (Synechococcus elongatus (strain ATCC 33912 / PCC 7942 / FACHB-805) (Anacystis nidulans R2)).